A 211-amino-acid chain; its full sequence is Thymidylate kinase (211 aa).

11 to 18 (GPDGAGKT) contributes to the ATP binding site.

It belongs to the thymidylate kinase family.

The catalysed reaction is dTMP + ATP = dTDP + ADP. Functionally, phosphorylation of dTMP to form dTDP in both de novo and salvage pathways of dTTP synthesis. The sequence is that of Thymidylate kinase from Streptococcus pyogenes serotype M1.